Consider the following 639-residue polypeptide: Cystathionine gamma-synthase (639 aa).

An N6-(pyridoxal phosphate)lysine modification is found at lysine 443.

It belongs to the trans-sulfuration enzymes family. MET7 subfamily. The cofactor is pyridoxal 5'-phosphate.

It localises to the cytoplasm. Its subcellular location is the nucleus. It catalyses the reaction O-succinyl-L-homoserine + L-cysteine = L,L-cystathionine + succinate + H(+). It functions in the pathway amino-acid biosynthesis; L-methionine biosynthesis via de novo pathway; L-cystathionine from O-succinyl-L-homoserine: step 1/1. Functionally, catalyzes the formation of L-cystathionine from O-succinyl-L-homoserine (OSHS) and L-cysteine, via a gamma-replacement reaction. In the absence of thiol, catalyzes gamma-elimination to form 2-oxobutanoate, succinate and ammonia. The sequence is that of Cystathionine gamma-synthase from Saccharomyces cerevisiae (strain ATCC 204508 / S288c) (Baker's yeast).